We begin with the raw amino-acid sequence, 454 residues long: MKKLFGTDGVRGVANVYPMTTEMAMQIGRAAAYIFRNGKRRHRIVIGKDTRLSGYMIENALVAGICSMGVDVLQVGPLPTPGIANITSSMRADAGVVISASHNPFQDNGIKFFSRDGFKLPDEMELRIEELIFSGKIDSLRPIATEVGKAYRIDDAVGRFVVFLKSTFPKDLDLSGLKIVLDCANGAAYKVAPAVLEELGAEVIAIGVKPNGTNINAGCGSLYPNIISEAVKEHRADLGIALDGDADRVIFVDEFGHEVDGDHIMAICATDMLKQNKLRENTLVATVMSNMGLDIAVKKAGGRVIKTAVGDRYVVEEMQKGGYNLGGEQSGHMIFLDHNTTGDGVLSALQVLAVMQRHNKRLSELAEVMIPLPQVLVNVRVTEKRDVMTIPEVAGLIGDIEAKVKDEGRILIRYSGTEPLLRVMLEGQDKYQITGWAKEIAELVEKNIGGSEHG.

S101 (phosphoserine intermediate) is an active-site residue. S101, D243, D245, and D247 together coordinate Mg(2+). S101 carries the phosphoserine modification.

The protein belongs to the phosphohexose mutase family. Mg(2+) is required as a cofactor. Activated by phosphorylation.

It carries out the reaction alpha-D-glucosamine 1-phosphate = D-glucosamine 6-phosphate. Functionally, catalyzes the conversion of glucosamine-6-phosphate to glucosamine-1-phosphate. The sequence is that of Phosphoglucosamine mutase from Geotalea uraniireducens (strain Rf4) (Geobacter uraniireducens).